Reading from the N-terminus, the 624-residue chain is Threonine--tRNA ligase (624 aa).

The editing domain stretch occupies residues 1 to 143; sequence MRLLFIHADE…SRTVTPEAAE (143 aa). The tract at residues 197-499 is catalytic; the sequence is AHVKLMREKE…EQEGKLPTLP (303 aa). The Zn(2+) site is built by C289, H340, and H467. The interval 598–624 is disordered; it reads LERETEGKPRVPLTIPDRLSRRPRFGR.

It belongs to the class-II aminoacyl-tRNA synthetase family. Homodimer. Requires Zn(2+) as cofactor.

The protein localises to the cytoplasm. The enzyme catalyses tRNA(Thr) + L-threonine + ATP = L-threonyl-tRNA(Thr) + AMP + diphosphate + H(+). Catalyzes the attachment of threonine to tRNA(Thr) in a two-step reaction: L-threonine is first activated by ATP to form Thr-AMP and then transferred to the acceptor end of tRNA(Thr). Also edits incorrectly charged L-seryl-tRNA(Thr). This chain is Threonine--tRNA ligase, found in Methanopyrus kandleri (strain AV19 / DSM 6324 / JCM 9639 / NBRC 100938).